The primary structure comprises 476 residues: Protein transport protein Sec61 subunit alpha isoform A (476 aa).

At glycine 2–leucine 33 the chain is on the cytoplasmic side. The chain crosses the membrane as a helical span at residues tryptophan 34–isoleucine 53. At methionine 54–leucine 76 the chain is on the lumenal side. The helical transmembrane segment at methionine 77–glycine 96 threads the bilayer. At alanine 97–lysine 117 the chain is on the cytoplasmic side. The helical transmembrane segment at leucine 118 to glycine 138 threads the bilayer. Residues aspartate 139–glycine 144 lie on the Lumenal side of the membrane. Residues alanine 145 to leucine 165 traverse the membrane as a helical segment. The Cytoplasmic segment spans residues aspartate 166–glycine 172. Residues tyrosine 173–tryptophan 193 traverse the membrane as a helical segment. Topologically, residues lysine 194–proline 240 are lumenal. A helical membrane pass occupies residues asparagine 241–phenylalanine 261. Residues arginine 262 to asparagine 288 are Cytoplasmic-facing. A helical membrane pass occupies residues isoleucine 289–serine 309. The Lumenal segment spans residues threonine 310–valine 354. A helical transmembrane segment spans residues leucine 355–phenylalanine 375. Residues serine 376–alanine 420 lie on the Cytoplasmic side of the membrane. Residues alanine 421 to isoleucine 441 form a helical membrane-spanning segment. Residues glycine 442–threonine 445 lie on the Lumenal side of the membrane. Residues glycine 446–valine 462 form a helical membrane-spanning segment. Residues lysine 463–phenylalanine 476 lie on the Cytoplasmic side of the membrane.

The protein belongs to the SecY/SEC61-alpha family. As to quaternary structure, the SEC61 channel-forming translocon complex consists of channel-forming core components SEC61A1, SEC61B and SEC61G and different auxiliary components such as SEC62 and SEC63. The SEC61 channel associates with the multi-pass translocon (MPT) complex.

The protein localises to the endoplasmic reticulum membrane. Functionally, component of SEC61 channel-forming translocon complex that mediates transport of signal peptide-containing precursor polypeptides across the endoplasmic reticulum (ER). Forms a ribosome receptor and a gated pore in the ER membrane, both functions required for cotranslational translocation of nascent polypeptides. May cooperate with auxiliary protein SEC62, SEC63 and HSPA5/BiP to enable post-translational transport of small presecretory proteins. The SEC61 channel is also involved in ER membrane insertion of transmembrane proteins: it mediates membrane insertion of the first few transmembrane segments of proteins, while insertion of subsequent transmembrane regions of multi-pass membrane proteins is mediated by the multi-pass translocon (MPT) complex. The sequence is that of Protein transport protein Sec61 subunit alpha isoform A (sec61aa) from Oncorhynchus mykiss (Rainbow trout).